Here is a 331-residue protein sequence, read N- to C-terminus: MATTTTVDDAQPPTLQNILDQKSLKWIFCGGKGGVGKTTTSCSLAIQLAKVRESVLLISTDPAHNLSDAFGQKFGREAVKVNGFSNLSAMEIDPTSSMQEMIEQSEQRGGALAPFMQDLAFAIPGVDEAMGFAEIMKLVKSMEYSVVVFDTAPTGHTLRFLSFPSVLEKALTKFSSFGKSLGPMFQQFQSMMGGGANAQEDMFAKLEGMRQVITEVNSQFKDETKTTFVCVCIAEFLSLYETERLIQELTQYGIDTHAIVCNQLLYPPPGSQCEHCRVRKAMQDKYVHEMMDLYAEDFNVVKIPLLTEEVRGPEKLSSLSEYLMHPYQPPQ.

32-39 (KGGVGKTT) contributes to the ATP binding site. Asp61 is a catalytic residue. The ATP site is built by Glu235 and Asn262. Cys273 and Cys276 together coordinate Zn(2+).

The protein belongs to the arsA ATPase family. Homodimer.

The protein resides in the cytoplasm. Its subcellular location is the endoplasmic reticulum. In terms of biological role, ATPase required for the post-translational delivery of tail-anchored (TA) proteins to the endoplasmic reticulum. Recognizes and selectively binds the transmembrane domain of TA proteins in the cytosol. This complex then targets to the endoplasmic reticulum by membrane-bound receptors, where the tail-anchored protein is released for insertion. This process is regulated by ATP binding and hydrolysis. ATP binding drives the homodimer towards the closed dimer state, facilitating recognition of newly synthesized TA membrane proteins. ATP hydrolysis is required for insertion. Subsequently, the homodimer reverts towards the open dimer state, lowering its affinity for the membrane-bound receptor, and returning it to the cytosol to initiate a new round of targeting. This is ATPase GET3 from Malassezia globosa (strain ATCC MYA-4612 / CBS 7966) (Dandruff-associated fungus).